The primary structure comprises 168 residues: Peptide deformylase 2 (168 aa).

Residues Cys-91 and His-133 each contribute to the Fe cation site. Residue Glu-134 is part of the active site. Residue His-137 coordinates Fe cation.

Belongs to the polypeptide deformylase family. Requires Fe(2+) as cofactor.

It carries out the reaction N-terminal N-formyl-L-methionyl-[peptide] + H2O = N-terminal L-methionyl-[peptide] + formate. Its function is as follows. Removes the formyl group from the N-terminal Met of newly synthesized proteins. Requires at least a dipeptide for an efficient rate of reaction. N-terminal L-methionine is a prerequisite for activity but the enzyme has broad specificity at other positions. The chain is Peptide deformylase 2 from Vibrio parahaemolyticus serotype O3:K6 (strain RIMD 2210633).